A 420-amino-acid chain; its full sequence is Phosphoribosylamine--glycine ligase (420 aa).

Positions 108–314 (KQFMEKYAIP…FAALIAALLN (207 aa)) constitute an ATP-grasp domain. 134-195 (LDERGVPIVI…EDFLAGEEFS (62 aa)) is a binding site for ATP. 2 residues coordinate Mg(2+): E284 and N286.

The protein belongs to the GARS family. It depends on Mg(2+) as a cofactor. Mn(2+) serves as cofactor.

It catalyses the reaction 5-phospho-beta-D-ribosylamine + glycine + ATP = N(1)-(5-phospho-beta-D-ribosyl)glycinamide + ADP + phosphate + H(+). The protein operates within purine metabolism; IMP biosynthesis via de novo pathway; N(1)-(5-phospho-D-ribosyl)glycinamide from 5-phospho-alpha-D-ribose 1-diphosphate: step 2/2. The polypeptide is Phosphoribosylamine--glycine ligase (Listeria innocua serovar 6a (strain ATCC BAA-680 / CLIP 11262)).